The chain runs to 76 residues: DNA-directed RNA polymerase subunit Rpo10 (76 aa).

Residues cysteine 16, cysteine 19, cysteine 53, and cysteine 54 each coordinate Zn(2+).

It belongs to the archaeal Rpo10/eukaryotic RPB10 RNA polymerase subunit family. Part of the RNA polymerase complex. It depends on Zn(2+) as a cofactor.

It localises to the cytoplasm. The catalysed reaction is RNA(n) + a ribonucleoside 5'-triphosphate = RNA(n+1) + diphosphate. Its function is as follows. DNA-dependent RNA polymerase (RNAP) catalyzes the transcription of DNA into RNA using the four ribonucleoside triphosphates as substrates. This chain is DNA-directed RNA polymerase subunit Rpo10, found in Archaeoglobus fulgidus (strain ATCC 49558 / DSM 4304 / JCM 9628 / NBRC 100126 / VC-16).